The chain runs to 959 residues: rDNA transcriptional regulator pol5 (959 aa).

Phosphoserine is present on residues Ser742 and Ser743. The interval His936–His959 is disordered. Polar residues predominate over residues Gln937–Lys948. Residues Gly950–His959 show a composition bias toward basic and acidic residues.

The protein belongs to the MYBBP1A family. Interacts with cdc10.

It is found in the nucleus. In terms of biological role, plays an important role in the regulation of rRNA transcription. Binds to rDNA promoter fragments. This chain is rDNA transcriptional regulator pol5 (pol5), found in Schizosaccharomyces pombe (strain 972 / ATCC 24843) (Fission yeast).